A 435-amino-acid chain; its full sequence is MTSAARKVSVLLGAQWGDEGKGKIIDFLIENHKINVTARCQGGNNAGHTVVANGRKYDFHILPSGIISPTCFNVIGNGVVVNLDAFFSELAHNGVLSEPGWEKRIMISSEAHLVFGVHSQVDGRQEDSLAAKNKIGTTNRGIGPTYSSKCFRNGIRVADLMADFEEFSEKYRRLVEHYKKQFPSIEVDVDGELARFKEHREKLAELKLVGDTVGFIHEQRTNGKQVLIEGANGALLDIDFGTYPYVTSSNSTVGGACTGLGVPPTAIGSVIGVVKAYQTRVGTGPFPTELFDADGEKLQSIGKEVGVTTGRKRRCGWIDLFLLRRSAMINGYTDIALTKLDILDTFPTIKVAVGYKLNGQTLTAPPAQTNAWGAVEVEYKEFEGWMEPTVGVRKYEDLPEKCRQYIQFIEEFIKVPIVYIGVGAERESLIVRQKQ.

Residues Gly17–Lys23 and Gly47–Thr49 each bind GTP. The active-site Proton acceptor is Asp18. Mg(2+) is bound by residues Asp18 and Gly47. IMP is bound by residues Asp18–Lys21, Asn45–His48, Thr138, Arg152, Asn232, Thr247, and Arg311. Residue His48 is the Proton donor of the active site. Val307 to Arg313 is a binding site for substrate. GTP contacts are provided by residues Arg313, Lys339–Asp341, and Gly421–Gly423.

It belongs to the adenylosuccinate synthetase family. In terms of assembly, homodimer. Mg(2+) is required as a cofactor.

It localises to the cytoplasm. The enzyme catalyses IMP + L-aspartate + GTP = N(6)-(1,2-dicarboxyethyl)-AMP + GDP + phosphate + 2 H(+). Its pathway is purine metabolism; AMP biosynthesis via de novo pathway; AMP from IMP: step 1/2. Functionally, plays an important role in the de novo pathway and in the salvage pathway of purine nucleotide biosynthesis. Catalyzes the first committed step in the biosynthesis of AMP from IMP. In Caenorhabditis briggsae, this protein is Adenylosuccinate synthetase.